The chain runs to 449 residues: Lysine-sensitive aspartokinase 3 (449 aa).

Positions 2–245 are aspartokinase; it reads SEIVVSKFGG…AAKRIDEIAF (244 aa). Residue 8–11 coordinates ATP; that stretch reads KFGG. Substrate-binding positions include T45, E119, and 198 to 201; that span reads RGGS. Residues 221 to 222, Y227, R232, and 257 to 258 each bind ATP; these read TD and KV. Residues 246–449 form an interface region; the sequence is AEAAEMATFG…VQKLHSNLFE (204 aa). Positions 299–449 are required for homodimerization; it reads FRALALRRNQ…VQKLHSNLFE (151 aa). Residues 313–394 form the ACT domain; it reads LHSLNMLHSR…GLALVALIGN (82 aa). L-lysine-binding positions include M318, S321, 324–325, 338–340, and 345–346; these read FL, SVD, and SE.

It belongs to the aspartokinase family. As to quaternary structure, homodimer. In the inactive form a homotetramer is formed.

The catalysed reaction is L-aspartate + ATP = 4-phospho-L-aspartate + ADP. It participates in amino-acid biosynthesis; L-lysine biosynthesis via DAP pathway; (S)-tetrahydrodipicolinate from L-aspartate: step 1/4. With respect to regulation, synthesis and activity are sensitive to the allosteric inhibitor lysine, one of the end metabolites of the aspartic acid family branched pathway. The sequence is that of Lysine-sensitive aspartokinase 3 (lysC) from Escherichia coli (strain K12).